The following is a 397-amino-acid chain: Acetate kinase 2 (397 aa).

A Mg(2+)-binding site is contributed by Asn10. Lys17 is a binding site for ATP. Residue Arg90 coordinates substrate. Asp147 (proton donor/acceptor) is an active-site residue. Residues 207-211, 281-283, and 329-333 contribute to the ATP site; these read HLGNG, DAR, and GIGEN. Residue Glu385 coordinates Mg(2+).

The protein belongs to the acetokinase family. As to quaternary structure, homodimer. The cofactor is Mg(2+). Mn(2+) serves as cofactor.

Its subcellular location is the cytoplasm. It catalyses the reaction acetate + ATP = acetyl phosphate + ADP. It functions in the pathway metabolic intermediate biosynthesis; acetyl-CoA biosynthesis; acetyl-CoA from acetate: step 1/2. Functionally, catalyzes the formation of acetyl phosphate from acetate and ATP. Can also catalyze the reverse reaction. In Aliivibrio fischeri (strain ATCC 700601 / ES114) (Vibrio fischeri), this protein is Acetate kinase 2.